The primary structure comprises 432 residues: Transcriptional adapter 3-A (432 aa).

Disordered regions lie at residues 90-127 (HELGTPIKHSKPKKQKLDGKVSHASGPGPGRPKSRNMQ) and 275-314 (SPVEDSPIPEISGKESGTDGASTSPRSQNKPFSAPHTKSL). Residues 293–305 (DGASTSPRSQNKP) are compositionally biased toward polar residues. Positions 335–398 (ADDSEDEVLA…NEVMDAFRKI (64 aa)) form a coiled coil.

It belongs to the NGG1 family.

It is found in the nucleus. Functionally, functions as a component of the PCAF complex. The PCAF complex is capable of efficiently acetylating histones in a nucleosomal context. The polypeptide is Transcriptional adapter 3-A (tada3-a) (Xenopus laevis (African clawed frog)).